The chain runs to 137 residues: Small ribosomal subunit protein uS12 (137 aa).

The interval 1–55 (MPTINQLVRKPRQSKIKKSDSPALNKGFNSKKKKFTDLNSPQKRGVCTRVGTMTP) is disordered. D102 is modified (3-methylthioaspartic acid). The disordered stretch occupies residues 118 to 137 (SGVDGRRQGRSLYGTKKPKN).

This sequence belongs to the universal ribosomal protein uS12 family. As to quaternary structure, part of the 30S ribosomal subunit. Contacts proteins S8 and S17. May interact with IF1 in the 30S initiation complex.

Its function is as follows. With S4 and S5 plays an important role in translational accuracy. In terms of biological role, interacts with and stabilizes bases of the 16S rRNA that are involved in tRNA selection in the A site and with the mRNA backbone. Located at the interface of the 30S and 50S subunits, it traverses the body of the 30S subunit contacting proteins on the other side and probably holding the rRNA structure together. The combined cluster of proteins S8, S12 and S17 appears to hold together the shoulder and platform of the 30S subunit. The sequence is that of Small ribosomal subunit protein uS12 from Staphylococcus aureus (strain Mu3 / ATCC 700698).